The following is a 245-amino-acid chain: Phosducin (245 aa).

Residues 1 to 67 (MEEARRQSLE…SRDDKDSKER (67 aa)) are disordered. Residues 1–241 (MEEARRQSLE…IHALEQTSME (241 aa)) form the Phosducin domain. Basic and acidic residues predominate over residues 58–67 (SRDDKDSKER). Ser-73 bears the Phosphoserine; by PKA mark. Residues 111-245 (YGFVYELETG…EQTSMEEDVE (135 aa)) form a thioredoxin fold region.

The protein belongs to the phosducin family. Forms a complex with the beta and gamma subunits of the GTP-binding protein, transducin. Interacts with CRX. Post-translationally, light-induced changes in cyclic nucleotide levels modulate the phosphorylation of this protein by cAMP kinase.

The protein resides in the cytoplasm. It is found in the cytosol. The protein localises to the nucleus. Its subcellular location is the cell projection. It localises to the cilium. The protein resides in the photoreceptor outer segment. It is found in the photoreceptor inner segment. Functionally, may participate in the regulation of visual phototransduction or in the integration of photoreceptor metabolism. Inhibits the transcriptional activation activity of the cone-rod homeobox CRX. The chain is Phosducin (PDC) from Equus caballus (Horse).